Consider the following 107-residue polypeptide: MRNAFTLLFETIEERKNNPLPQSYTNYLFSKGEDKILKKIGEECSEVIIASKNNDNEELVKEMVDVLYHCFVLLAEKNIPLKDIMEEVTERNGKLSRVGDRREIDTL.

This sequence belongs to the PRA-PH family.

Its subcellular location is the cytoplasm. It catalyses the reaction 1-(5-phospho-beta-D-ribosyl)-ATP + H2O = 1-(5-phospho-beta-D-ribosyl)-5'-AMP + diphosphate + H(+). It participates in amino-acid biosynthesis; L-histidine biosynthesis; L-histidine from 5-phospho-alpha-D-ribose 1-diphosphate: step 2/9. The chain is Phosphoribosyl-ATP pyrophosphatase from Bacillus cereus (strain ZK / E33L).